A 347-amino-acid chain; its full sequence is Probable dual-specificity RNA methyltransferase RlmN (347 aa).

The Proton acceptor role is filled by Glu90. A Radical SAM core domain is found at 96–326; it reads YKHGNSICIS…VTVRREMGSD (231 aa). Cysteines 103 and 331 form a disulfide. [4Fe-4S] cluster contacts are provided by Cys110, Cys114, and Cys117. Residues 157–158, Ser189, 212–214, and Asn288 each bind S-adenosyl-L-methionine; these read GE and SLH. Residue Cys331 is the S-methylcysteine intermediate of the active site.

Belongs to the radical SAM superfamily. RlmN family. It depends on [4Fe-4S] cluster as a cofactor.

Its subcellular location is the cytoplasm. The enzyme catalyses adenosine(2503) in 23S rRNA + 2 reduced [2Fe-2S]-[ferredoxin] + 2 S-adenosyl-L-methionine = 2-methyladenosine(2503) in 23S rRNA + 5'-deoxyadenosine + L-methionine + 2 oxidized [2Fe-2S]-[ferredoxin] + S-adenosyl-L-homocysteine. It catalyses the reaction adenosine(37) in tRNA + 2 reduced [2Fe-2S]-[ferredoxin] + 2 S-adenosyl-L-methionine = 2-methyladenosine(37) in tRNA + 5'-deoxyadenosine + L-methionine + 2 oxidized [2Fe-2S]-[ferredoxin] + S-adenosyl-L-homocysteine. Functionally, specifically methylates position 2 of adenine 2503 in 23S rRNA and position 2 of adenine 37 in tRNAs. In Clostridium botulinum (strain Alaska E43 / Type E3), this protein is Probable dual-specificity RNA methyltransferase RlmN.